Reading from the N-terminus, the 46-residue chain is Iota-conotoxin-like R11.17 (46 aa).

4-hydroxyproline occurs at positions 2 and 11. 4 cysteine pairs are disulfide-bonded: cysteine 5/cysteine 19, cysteine 12/cysteine 22, cysteine 18/cysteine 27, and cysteine 21/cysteine 38. 4-hydroxyproline is present on proline 29. D-phenylalanine is present on phenylalanine 44.

It belongs to the conotoxin I1 superfamily. As to expression, expressed by the venom duct.

Its subcellular location is the secreted. Iota-conotoxins bind to voltage-gated sodium channels (Nav) and act as agonists by shifting the voltage-dependence of activation to more hyperpolarized levels. Produces general excitatory symptoms. This chain is Iota-conotoxin-like R11.17, found in Conus radiatus (Rayed cone).